The primary structure comprises 1141 residues: Myosin-binding protein C, slow-type (1141 aa).

Positions 1–10 are enriched in basic and acidic residues; it reads MPEPTKKEEN. The tract at residues 1–51 is disordered; the sequence is MPEPTKKEENEVPAPAPPPEEPSKEKEAGTTPAKDWTLVETPPGEEQAKQN. Ig-like C2-type domains are found at residues 72 to 144, 251 to 340, 341 to 431, 432 to 520, and 522 to 619; these read GEDI…RCEV, SAAF…VREP, PIMV…VDLK, PLKI…HVID, and PKII…VVDF. Thr406 carries the post-translational modification Phosphothreonine. Ser611 carries the phosphoserine modification. 2 consecutive Fibronectin type-III domains span residues 622-721 and 722-833; these read PPVA…TSPP and TLLT…VKEI. Thr798 bears the Phosphothreonine mark. The residue at position 823 (Tyr823) is a Phosphotyrosine. The 95-residue stretch at 837–931 folds into the Ig-like C2-type 6 domain; that stretch reads PKIRIPRHLK…ASIDIQIIDR (95 aa). Residues 934 to 1029 enclose the Fibronectin type-III 3 domain; the sequence is PPQIVKIEDV…TKESAVIARD (96 aa). Residues 1047–1141 form the Ig-like C2-type 7 domain; sequence PMFTQPLVNT…CKLEVKVIAQ (95 aa).

It belongs to the immunoglobulin superfamily. MyBP family. As to quaternary structure, interacts with USP25 (isoform USP25m only); the interaction prevents proteasomal degradation of MYBPC1.

In terms of biological role, thick filament-associated protein located in the crossbridge region of vertebrate striated muscle a bands. Slow skeletal protein that binds to both myosin and actin. In vitro, binds to native thin filaments and modifies the activity of actin-activated myosin ATPase. May modulate muscle contraction or may play a more structural role. This is Myosin-binding protein C, slow-type (MYBPC1) from Homo sapiens (Human).